Consider the following 616-residue polypeptide: Homeodomain-interacting protein kinase 4 (616 aa).

The Protein kinase domain occupies 11–347 (YDIIEVLGKG…PSAALRHPFV (337 aa)). ATP contacts are provided by residues 17 to 25 (LGKGTFGEV) and lysine 40. The active-site Proton acceptor is aspartate 136. A disordered region spans residues 485-616 (RHKARKPPAG…SFLQHVTGHH (132 aa)). Over residues 496-511 (KSDSNLSNLIRLSQVS) the composition is skewed to polar residues. At serine 511 the chain carries Phosphoserine.

The protein belongs to the protein kinase superfamily. CMGC Ser/Thr protein kinase family. HIPK subfamily. In terms of processing, autophosphorylated.

It localises to the cytoplasm. It carries out the reaction L-seryl-[protein] + ATP = O-phospho-L-seryl-[protein] + ADP + H(+). The catalysed reaction is L-threonyl-[protein] + ATP = O-phospho-L-threonyl-[protein] + ADP + H(+). In terms of biological role, protein kinase that phosphorylates TP53, and thus induces TP53 repression of BIRC5 promoter. May act as a corepressor of transcription factors (Potential). The sequence is that of Homeodomain-interacting protein kinase 4 (HIPK4) from Macaca fascicularis (Crab-eating macaque).